We begin with the raw amino-acid sequence, 352 residues long: Fe(3+) ions import ATP-binding protein FbpC (352 aa).

Residues 5 to 239 (LHIGHLSKSF…PADLDAVLFI (235 aa)) form the ABC transporter domain. An ATP-binding site is contributed by 37–44 (GASGCGKT).

This sequence belongs to the ABC transporter superfamily. Fe(3+) ion importer (TC 3.A.1.10) family. The complex is composed of two ATP-binding proteins (FbpC), two transmembrane proteins (FbpB) and a solute-binding protein (FbpA).

The protein resides in the cell inner membrane. It carries out the reaction Fe(3+)(out) + ATP + H2O = Fe(3+)(in) + ADP + phosphate + H(+). In terms of biological role, part of the ABC transporter complex FbpABC involved in Fe(3+) ions import. Responsible for energy coupling to the transport system. This chain is Fe(3+) ions import ATP-binding protein FbpC, found in Neisseria gonorrhoeae.